The chain runs to 429 residues: D-galactonate dehydratase family member Caci_4410 (429 aa).

The interval 1 to 22 (MTDANHLLDPSGALPQTRPPWT) is disordered. Position 233 (Asp-233) interacts with Mg(2+). Position 235 (His-235) interacts with D-arabinonate. 2 residues coordinate Mg(2+): Glu-259 and Glu-285. D-arabinonate contacts are provided by Glu-285, Arg-306, His-335, and Glu-362.

This sequence belongs to the mandelate racemase/muconate lactonizing enzyme family. GalD subfamily.

In terms of biological role, has no detectable activity with D-mannonate and with a panel of 70 other acid sugars (in vitro), in spite of the conservation of the residues that are expected to be important for catalytic activity and cofactor binding. May have evolved a divergent function. The protein is D-galactonate dehydratase family member Caci_4410 of Catenulispora acidiphila (strain DSM 44928 / JCM 14897 / NBRC 102108 / NRRL B-24433 / ID139908).